The primary structure comprises 324 residues: tRNA-modifying protein YgfZ (324 aa).

A folate-binding site is contributed by Trp184.

This sequence belongs to the tRNA-modifying YgfZ family.

It is found in the cytoplasm. Functionally, folate-binding protein involved in regulating the level of ATP-DnaA and in the modification of some tRNAs. It is probably a key factor in regulatory networks that act via tRNA modification, such as initiation of chromosomal replication. The chain is tRNA-modifying protein YgfZ from Vibrio vulnificus (strain YJ016).